A 185-amino-acid chain; its full sequence is Ribosome-recycling factor (185 aa).

This sequence belongs to the RRF family.

It localises to the cytoplasm. Its function is as follows. Responsible for the release of ribosomes from messenger RNA at the termination of protein biosynthesis. May increase the efficiency of translation by recycling ribosomes from one round of translation to another. The chain is Ribosome-recycling factor from Rhodospirillum centenum (strain ATCC 51521 / SW).